A 493-amino-acid polypeptide reads, in one-letter code: Involucrin (493 aa).

3 disordered regions span residues 1–47 (MSQQ…CQKV), 60–123 (EEKH…GQLE), and 139–493 (KRDE…GQHE). A compositionally biased stretch (low complexity) spans 76-89 (EQQQPQEQELQQQH). Composition is skewed to basic and acidic residues over residues 90 to 116 (WEQD…REKQ), 139 to 151 (KRDE…KEQL), 161 to 174 (QLKH…HLEL), 184 to 193 (NLEHQEKPLE), and 201 to 213 (QLKH…KPLE). The span at 228-240 (QEGQSELPEQQRG) shows a compositional bias: polar residues. 5 stretches are compositionally biased toward basic and acidic residues: residues 250-270 (GQLK…HEEG), 282-360 (KHLE…HEGQ), 372-386 (KHLE…HPEQ), 411-431 (KHLE…EQLK), and 439-450 (QLKDLEQQERQL). Residues 473 to 493 (GEVLLPVEQQQQKQEVQGQHE) are compositionally biased toward low complexity.

It belongs to the involucrin family. Directly or indirectly cross-linked to cornifelin (CNFN). Substrate of transglutaminase. Specific glutamines or lysines are cross-linked to keratins, desmoplakin and to inter involucrin molecules. As to expression, keratinocytes of epidermis and other stratified squamous epithelia.

The protein resides in the cytoplasm. Functionally, part of the insoluble cornified cell envelope (CE) of stratified squamous epithelia. This Saguinus oedipus (Cotton-top tamarin) protein is Involucrin (IVL).